A 392-amino-acid polypeptide reads, in one-letter code: Putative RNA-binding protein Luc7-like 2 (392 aa).

Serine 18 is subject to Phosphoserine. Residues 102-177 (EVAKKRLAET…EAEEVYRNSM (76 aa)) adopt a coiled-coil conformation. Residues 235-257 (KQEKRNQERLKRREEREREEREK) are compositionally biased toward basic and acidic residues. The interval 235–392 (KQEKRNQERL…SSEEREAGEI (158 aa)) is disordered. Over residues 258–321 (LRRSRSHSKN…RSRSHQRSRH (64 aa)) the composition is skewed to basic residues. 5-hydroxylysine; by JMJD6 occurs at positions 266 and 269. 2 stretches are compositionally biased toward basic and acidic residues: residues 337–364 (KERF…DRDR) and 377–392 (RSED…AGEI).

The protein belongs to the Luc7 family. Interacts with SCNM1.

It is found in the nucleus speckle. The protein localises to the nucleus. It localises to the nucleoplasm. Its function is as follows. May bind to RNA via its Arg/Ser-rich domain. In Homo sapiens (Human), this protein is Putative RNA-binding protein Luc7-like 2 (LUC7L2).